The primary structure comprises 541 residues: Cytochrome P450 monooxygenase claW (541 aa).

A helical membrane pass occupies residues 12–32; the sequence is VINALVILFSFWAFLSLIRVI. Residue C480 coordinates heme.

The protein belongs to the cytochrome P450 family. It depends on heme as a cofactor.

The protein resides in the membrane. The protein operates within secondary metabolite biosynthesis; terpenoid biosynthesis. Functionally, cytochrome P450 monooxygenase; part of the gene cluster that mediates the biosynthesis of clavilactone A, a meroterpenoid that features a unique benzo-fused ten-membered carbocyclic ring unit with an alpha,beta-epoxy-gamma-lactone moiety, forming an intriguing 10/5/3 tricyclic nested skeleton. Cytochrome P450 monooxygenases claO, claP, claQ, claU, and claW are close orthologs, suggesting that a redundant function or pseudogenes are present in the cla cluster. These monoxygenases are not involved in clavilactone A biosynthesis nor its modification. ClaR, ClaS and ClaT are sufficient to produce clavilactone A. The biosynthesis begins with the prenyltransferase claS that transfers geranyl pyrophosphate (GPP) to hydroquinone to produces geranylhydroquinone. The cytochrome P450 monooxygenase claR then catalyzes the diradical coupling reaction between the intramolecular hydroquinone and allyl moieties to form the benzo-fused ten-membered carbocyclic ring unit of wigantol. Finally the cytochrome P450 monooxygenase claT exquisitely and stereoselectively assembles the alpha,beta-epoxy-gamma-lactone moiety, producing clavilactone A via arnebinol A. The chain is Cytochrome P450 monooxygenase claW from Ampulloclitocybe clavipes (Club foot).